The following is a 55-amino-acid chain: Large ribosomal subunit protein bL33 (55 aa).

Residues methionine 1–leucine 11 are compositionally biased toward basic and acidic residues. The segment at methionine 1–threonine 24 is disordered. Residues threonine 14 to threonine 24 show a composition bias toward polar residues.

The protein belongs to the bacterial ribosomal protein bL33 family.

In Burkholderia multivorans (strain ATCC 17616 / 249), this protein is Large ribosomal subunit protein bL33.